The following is a 742-amino-acid chain: Zinc finger MYND domain-containing protein 15 (742 aa).

The tract at residues 109–199 is disordered; the sequence is LEDGEEGEEE…QKRKGQRSEA (91 aa). Over residues 110–127 the composition is skewed to acidic residues; sequence EDGEEGEEEEEEDEEEEK. The segment covering 151–161 has biased composition (polar residues); that stretch reads SRESPQETNPP. The span at 166–189 shows a compositional bias: basic and acidic residues; it reads EAAREAGGGKDGCREDRVENETRP. The Zn(2+) site is built by C313, C316, C328, C331, C337, C341, H355, and C359. The MYND-type zinc finger occupies 313–359; it reads CHVCHRHSFEAKLTPCPQCSAVLYCGEACLRADWQRCPDDVSHRFWC. Disordered regions lie at residues 565–590 and 701–742; these read EVSV…GRRD and QGSG…RRRK. Pro residues predominate over residues 708-724; it reads APGPPPPSPTPSAPPAP. Over residues 725–742 the composition is skewed to basic residues; the sequence is TRRRRGEKKPGRGARRRK.

As to quaternary structure, interacts with HDAC1, HDAC3, HDAC6 and, to a lesser extent, with HDAC7.

Its subcellular location is the nucleus. It is found in the cytoplasm. In terms of biological role, acts as a transcriptional repressor through interaction with histone deacetylases (HDACs). May be important for spermiogenesis. The protein is Zinc finger MYND domain-containing protein 15 (ZMYND15) of Homo sapiens (Human).